The sequence spans 48 residues: Delta-actitoxin-Bgr2b (48 aa).

Intrachain disulfides connect Cys-4–Cys-45, Cys-6–Cys-35, and Cys-28–Cys-46.

Belongs to the sea anemone sodium channel inhibitory toxin family. Type I subfamily.

The protein resides in the secreted. The protein localises to the nematocyst. Functionally, binds voltage-dependently at site 3 of sodium channels (Nav) and inhibits the inactivation of the activated channels, thereby blocking neuronal transmission. Has effect on SCN4A/SCN1B, and SCN5A/SCN1B, has no effect on SCN2A/SCN1B, and SCN10A/SCN1B. Possesses the highest efficacy for the insect sodium channel para/tipE. Also interacts with sodium channels in cardiac cells. Shows lethality to crabs. This Bunodosoma granuliferum (Red warty sea anemone) protein is Delta-actitoxin-Bgr2b.